The sequence spans 222 residues: 26S proteasome non-ATPase regulatory subunit 9 (222 aa).

In terms of domain architecture, PDZ spans 108–194; the sequence is QARDMAEARE…KPLNVMVIRR (87 aa). Position 128 is a phosphoserine (S128).

It belongs to the proteasome subunit p27 family. Interacts with PSMC3. Part of a transient complex (modulator) containing PSMD9, PSMC6 and PSMC3 formed during the assembly of the 26S proteasome.

Its function is as follows. Acts as a chaperone during the assembly of the 26S proteasome, specifically of the base subcomplex of the PA700/19S regulatory complex (RC). During the base subcomplex assembly is part of an intermediate PSMD9:PSMC6:PSMC3 module, also known as modulator trimer complex; PSMD9 is released during the further base assembly process. This is 26S proteasome non-ATPase regulatory subunit 9 (Psmd9) from Rattus norvegicus (Rat).